The following is a 215-amino-acid chain: Large ribosomal subunit protein uL3 (215 aa).

A disordered region spans residues 136 to 155 (GVSISHRSHGSTGQRQDPGK). Residue Gln-151 is modified to N5-methylglutamine.

The protein belongs to the universal ribosomal protein uL3 family. Part of the 50S ribosomal subunit. Forms a cluster with proteins L14 and L19. Post-translationally, methylated by PrmB.

Functionally, one of the primary rRNA binding proteins, it binds directly near the 3'-end of the 23S rRNA, where it nucleates assembly of the 50S subunit. The chain is Large ribosomal subunit protein uL3 from Rickettsia conorii (strain ATCC VR-613 / Malish 7).